Here is a 371-residue protein sequence, read N- to C-terminus: Poly(rC)-binding protein 3 (371 aa).

3 KH domains span residues 45 to 95 (TLTI…TITG), 129 to 182 (PVTL…TISG), and 293 to 357 (ASTH…QYLI).

The protein resides in the cytoplasm. In terms of biological role, single-stranded nucleic acid binding protein that binds preferentially to oligo dC. The sequence is that of Poly(rC)-binding protein 3 from Homo sapiens (Human).